A 357-amino-acid chain; its full sequence is GDSL esterase/lipase At5g45950 (357 aa).

The signal sequence occupies residues 1-23 (MLLVAFVTLLVAVALQPLPSVLS). Asparagine 37 is a glycosylation site (N-linked (GlcNAc...) asparagine). Serine 47 (nucleophile) is an active-site residue. N-linked (GlcNAc...) asparagine glycosylation is present at asparagine 132. Residues aspartate 331 and histidine 334 contribute to the active site.

The protein belongs to the 'GDSL' lipolytic enzyme family.

The protein localises to the secreted. This Arabidopsis thaliana (Mouse-ear cress) protein is GDSL esterase/lipase At5g45950.